The chain runs to 166 residues: uncharacterized protein (166 aa).

This is an uncharacterized protein from Xestia (XnGV).